Here is a 572-residue protein sequence, read N- to C-terminus: MEPEAPRRRHTHQRGYLLTRNPHLNKDLAFTLEERQQLNIHGLLPPSFNSQEIQVLRVVKNFEHLNSDFDRYLLLMDLQDRNEKLFYRVLTSDIEKFMPIVYTPTVGLACQQYSLVFRKPRGLFITIHDRGHIASVLNAWPEDVIKAIVVTDGERILGLGDLGCNGMGIPVGKLALYTACGGMNPQECLPVILDVGTENEELLKDPLYIGLRQRRVRGSEYDDFLDEFMEAVSSKYGMNCLIQFEDFANVNAFRLLNKYRNQYCTFNDDIQGTASVAVAGLLAALRITKNKLSDQTILFQGAGEAALGIAHLIVMALEKEGLPKEKAIKKIWLVDSKGLIVKGRASLTQEKEKFAHEHEEMKNLEAIVQEIKPTALIGVAAIGGAFSEQILKDMAAFNERPIIFALSNPTSKAECSAEQCYKITKGRAIFASGSPFDPVTLPNGQTLYPGQGNNSYVFPGVALGVVACGLRQITDNIFLTTAEVIAQQVSDKHLEEGRLYPPLNTIRDVSLKIAEKIVKDAYQEKTATVYPEPQNKEAFVRSQMYSTDYDQILPDCYSWPEEVQKIQTKVDQ.

Methionine 1 bears the N-acetylmethionine mark. Tyrosine 102 acts as the Proton donor in catalysis. Residue arginine 155 coordinates NADP(+). Catalysis depends on lysine 173, which acts as the Proton acceptor. Positions 245, 246, and 269 each coordinate a divalent metal cation. Residues aspartate 269 and 301–318 (GAGE…MALE) each bind NADP(+). Serine 336 carries the post-translational modification Phosphoserine. Residue asparagine 408 coordinates NADP(+).

It belongs to the malic enzymes family. As to quaternary structure, homotetramer. Requires Mg(2+) as cofactor. It depends on Mn(2+) as a cofactor. As to expression, expressed in all tissues tested including liver, placenta and white adipose tissue.

It localises to the cytoplasm. It carries out the reaction (S)-malate + NADP(+) = pyruvate + CO2 + NADPH. The enzyme catalyses oxaloacetate + H(+) = pyruvate + CO2. In terms of biological role, catalyzes the oxidative decarboxylation of (S)-malate in the presence of NADP(+) and divalent metal ions, and decarboxylation of oxaloacetate. In Homo sapiens (Human), this protein is NADP-dependent malic enzyme.